We begin with the raw amino-acid sequence, 217 residues long: Chorionic somatomammotropin hormone 1 (217 aa).

The first 26 residues, 1 to 26 (MAPGSRTSLLLAFALLCLPWLQEAGA), serve as a signal peptide directing secretion. H44 contacts Zn(2+). C79 and C191 form a disulfide bridge. Zn(2+) is bound at residue E200. C208 and C215 are disulfide-bonded.

The protein belongs to the somatotropin/prolactin family. In terms of assembly, can be found in a monomeric as well as dimeric form.

It localises to the secreted. Functionally, produced only during pregnancy and is involved in stimulating lactation, fetal growth and metabolism. Does not interact with GHR but only activates PRLR through zinc-induced dimerization. This is Chorionic somatomammotropin hormone 1 (CSH1) from Homo sapiens (Human).